The chain runs to 393 residues: NADH-quinone oxidoreductase subunit D (393 aa).

This sequence belongs to the complex I 49 kDa subunit family. In terms of assembly, NDH-1 is composed of 14 different subunits. Subunits NuoB, C, D, E, F, and G constitute the peripheral sector of the complex.

It localises to the cell inner membrane. The enzyme catalyses a quinone + NADH + 5 H(+)(in) = a quinol + NAD(+) + 4 H(+)(out). Functionally, NDH-1 shuttles electrons from NADH, via FMN and iron-sulfur (Fe-S) centers, to quinones in the respiratory chain. The immediate electron acceptor for the enzyme in this species is believed to be ubiquinone. Couples the redox reaction to proton translocation (for every two electrons transferred, four hydrogen ions are translocated across the cytoplasmic membrane), and thus conserves the redox energy in a proton gradient. The protein is NADH-quinone oxidoreductase subunit D of Ehrlichia chaffeensis (strain ATCC CRL-10679 / Arkansas).